The following is a 433-amino-acid chain: MAIIPLAQLNELTISSSSSSFLTKSISSHSLHSSCICASSRISQFRGGFSKRRSDSTRSKSMRLRCSFSPMESARIKVIGVGGGGNNAVNRMISSGLQSVDFYAINTDSQALLQSSAENPLQIGELLTRGLGTGGNPLLGEQAAEESKDAIANALKGSDLVFITAGMGGGTGSGAAPVVAQISKDAGYLTVGVVTYPFSFEGRKRSLQALEAIEKLQKNVDTLIVIPNDRLLDIADEQTPLQDAFLLADDVLRQGVQGISDIITIPGLVNVDFADVKAVMKDSGTAMLGVGVSSSKNRAEEAAEQATLAPLIGSSIQSATGVVYNITGGKDITLQEVNRVSQVVTSLADPSANIIFGAVVDDRYTGEIHVTIIATGFSQSFQKTLLTDPRAAKLLDKMGSSGQQENKGMSLPHQKQSPSTISTKSSSPRRLFF.

A chloroplast-targeting transit peptide spans 1 to 66 (MAIIPLAQLN…TRSKSMRLRC (66 aa)). S67 bears the N-acetylserine mark. GTP-binding positions include 83-87 (GGGNN), 170-172 (GTG), E201, R205, and D249. A disordered region spans residues 399-433 (GSSGQQENKGMSLPHQKQSPSTISTKSSSPRRLFF). Residues 414 to 433 (QKQSPSTISTKSSSPRRLFF) show a composition bias toward low complexity.

This sequence belongs to the FtsZ family. In terms of assembly, aggregates to form a contractile ring-like structure; contraction of the ring was accompanied by an increase in the filament turnover rate. This aggregation is regulated in midchloroplast stroma by MIND1 (repressor) and MINE1 (promoter). Self-interacts and binds to FTSZ2-1 in heteromers to form two morphologically distinct types of filaments, termed type-I (smooth filaments) and type-II (rough filaments), in a GTP-dependent manner. Interacts with ARC3. Part of a complex made of ARC3, ARC6, FTSZ1 and FTSZ2. In pollen grain, restricted to plastids of vegetative cells. Also present in pollen tubes plastids.

Its subcellular location is the plastid. It localises to the chloroplast stroma. It is found in the chloroplast thylakoid membrane. Exhibits GTPase activity. Component of the plastid division machinery that forms a contractile ring at the division site. Required for plastid division in a dose-dependent manner. Involved in epidermal plastids division in a MINE1-dependent manner. Involved in blue light-induced chloroplast movements. May regulate thylakoid development. In the vegetative shoot apex, at the shoot apical meristem (SAM), where the proplastid-to-chloroplast transition takes place, contributes equally with FTSZ2-1 in the L2 layer to plastid division. The sequence is that of Cell division protein FtsZ homolog 1, chloroplastic from Arabidopsis thaliana (Mouse-ear cress).